The chain runs to 84 residues: Envelope small membrane protein (84 aa).

Over methionine 1–isoleucine 18 the chain is Virion surface. A helical membrane pass occupies residues isoleucine 19–phenylalanine 39. Topologically, residues lysine 40–aspartate 80 are intravirion.

It belongs to the betacoronaviruses E protein family. Homopentamer. Interacts with membrane protein M in the budding compartment of the host cell, which is located between endoplasmic reticulum and the Golgi complex. Interacts with Nucleoprotein.

The protein resides in the host Golgi apparatus membrane. Functionally, plays a central role in virus morphogenesis and assembly. Acts as a viroporin and self-assembles in host membranes forming pentameric protein-lipid pores that allow ion transport. Also plays a role in the induction of apoptosis. The sequence is that of Envelope small membrane protein from Porcine hemagglutinating encephalomyelitis virus (strain 67N) (HEV-67N).